The primary structure comprises 96 residues: 10.9 kDa protein (96 aa).

In Pseudomonas aeruginosa (Bacteriophage Pf1), this protein is 10.9 kDa protein.